The primary structure comprises 685 residues: Twinkle mtDNA helicase (685 aa).

The transit peptide at 1 to 31 directs the protein to the mitochondrion; sequence MWLLLRRAYPLRILLPLRGEWVGRRGLPRSL. The contributes to single strand DNA binding activity stretch occupies residues 1–122; the sequence is MWLLLRRAYP…LCMTSLAEGS (122 aa). Residues 54-214 form an N-terminal region (NTR) region; the sequence is PVTTTEIRQY…LVFPWFTPGS (161 aa). Positions 122 to 373 are required for hexamers formation and DNA helicase activity; that stretch reads SWEDLQASVE…WHKSIVSFRQ (252 aa). The primase-like domain stretch occupies residues 215–335; that stretch reads SGLRGLKLLG…LNPKRCSLVR (121 aa). Positions 385-636 constitute an SF4 helicase domain; sequence VEQAAGVRWS…LTFSIPPKSK (252 aa). Positions 406-591 are maybe required for stable oligomeric structure; the sequence is HRKGELTVFT…QEADNVLILQ (186 aa). Residue 416 to 423 participates in ATP binding; that stretch reads GPTGSGKT. A coiled-coil region spans residues 454–482; it reads RVMLTQFAVTRLEEQLDKYEEWADRFEDL. Residues 641–685 form a might negatively regulate ATPase activity region; the sequence is KIKDDNGLVAKKSSSGKKGAAHQNPEICLGQDPSPAQPDTSKSSG. The segment at 642 to 685 is disordered; it reads IKDDNGLVAKKSSSGKKGAAHQNPEICLGQDPSPAQPDTSKSSG.

Homohexamer (via C-terminus), which assembles in a ring-like structure. Homoheptamer, which assembles in a ring-like structure. Homooctamer, which assembles in a ring-like structure. Oligomers may sequentially eject two monomers (octamer&gt;heptamer&gt;hexamer) upon DNA binding. Oligomerization is Mg(2+), nucleotide and DNA-independent, however, Mg(2+) and nucleotide stabilize the homohexameric form. Interacts with POLG in vitro. Interacts with LONP1. Ubiquitous with the highest levels in the liver, heart and kidneys. The skeletal muscle, brain and testis showed lower but detectable expression. Expression is coregulated with MRPL43.

It localises to the mitochondrion matrix. It is found in the mitochondrion nucleoid. The protein resides in the mitochondrion inner membrane. It carries out the reaction ATP + H2O = ADP + phosphate + H(+). It catalyses the reaction Couples ATP hydrolysis with the unwinding of duplex DNA at the replication fork by translocating in the 5'-3' direction. This creates two antiparallel DNA single strands (ssDNA). The leading ssDNA polymer is the template for DNA polymerase III holoenzyme which synthesizes a continuous strand.. In terms of biological role, mitochondrial helicase involved in mtDNA replication and repair. Might have a role in mtDNA repair. Has DNA strand separation activity needed to form a processive replication fork for leading strand synthesis which is catalyzed by the formation of a replisome complex with POLG and mtSDB. Preferentially unwinds DNA substrates with pre-existing 5'-and 3'- single-stranded tails but is also active on a 5'- flap substrate. Can dissociate the invading strand of immobile or mobile D-loop DNA structures irrespective of the single strand polarity of the third strand. In addition to its DNA strand separation activity, also has DNA strand annealing, DNA strand-exchange and DNA branch migration activities. In Mus musculus (Mouse), this protein is Twinkle mtDNA helicase.